The primary structure comprises 176 residues: Small ribosomal subunit protein uS8c (176 aa).

It belongs to the universal ribosomal protein uS8 family. As to quaternary structure, part of the 30S ribosomal subunit.

Its subcellular location is the plastid. The protein localises to the chloroplast. Functionally, one of the primary rRNA binding proteins, it binds directly to 16S rRNA central domain where it helps coordinate assembly of the platform of the 30S subunit. This chain is Small ribosomal subunit protein uS8c (rps8), found in Stigeoclonium helveticum (Green alga).